The primary structure comprises 256 residues: Trans-aconitate 2-methyltransferase (256 aa).

Belongs to the methyltransferase superfamily. Tam family.

The protein resides in the cytoplasm. It catalyses the reaction trans-aconitate + S-adenosyl-L-methionine = (E)-3-(methoxycarbonyl)pent-2-enedioate + S-adenosyl-L-homocysteine. In terms of biological role, catalyzes the S-adenosylmethionine monomethyl esterification of trans-aconitate. The polypeptide is Trans-aconitate 2-methyltransferase (Rhizobium rhizogenes (strain K84 / ATCC BAA-868) (Agrobacterium radiobacter)).